We begin with the raw amino-acid sequence, 228 residues long: Lactate utilization protein A (228 aa).

It belongs to the LutA/YkgE family.

In terms of biological role, is involved in L-lactate degradation and allows cells to grow with lactate as the sole carbon source. This chain is Lactate utilization protein A, found in Lysinibacillus sphaericus (strain C3-41).